The following is a 475-amino-acid chain: Glycogen synthase (475 aa).

K15 contacts ADP-alpha-D-glucose.

The protein belongs to the glycosyltransferase 1 family. Bacterial/plant glycogen synthase subfamily.

The catalysed reaction is [(1-&gt;4)-alpha-D-glucosyl](n) + ADP-alpha-D-glucose = [(1-&gt;4)-alpha-D-glucosyl](n+1) + ADP + H(+). It functions in the pathway glycan biosynthesis; glycogen biosynthesis. Functionally, synthesizes alpha-1,4-glucan chains using ADP-glucose. The protein is Glycogen synthase of Chlamydia felis (strain Fe/C-56) (Chlamydophila felis).